Reading from the N-terminus, the 282-residue chain is MQVITSVKEAKQIVKDWKSHQLSIGYVPTMGFLHDGHLSLVKHAKTQDKVIVSIFVNPMQFGPNEDFSSYPRDLERDIKMCQDNGVDMVFIPDATQMYLKNFSTYVDMNTITDKLCGAKRPGHFRGVCTVLTKFFNILNPDIVYMGQKDAQQCVVVRHMVDDLNFDLKIQICPIIREEDGLAKSSRNVYLSKEERKASLAISQSIFLAEKLVREGEKNTSKIIQAMKDILEKEKLIKIDYIELVDFNTMENIENITDNVLGAVAAFVGKTRLIDNFLVQGLK.

Residue 30 to 37 (MGFLHDGH) participates in ATP binding. Residue H37 is the Proton donor of the active site. Q60 serves as a coordination point for (R)-pantoate. Q60 is a binding site for beta-alanine. 146–149 (GQKD) is a binding site for ATP. Q152 contacts (R)-pantoate. ATP-binding positions include I175 and 183–186 (KSSR).

It belongs to the pantothenate synthetase family. In terms of assembly, homodimer.

The protein localises to the cytoplasm. It catalyses the reaction (R)-pantoate + beta-alanine + ATP = (R)-pantothenate + AMP + diphosphate + H(+). It functions in the pathway cofactor biosynthesis; (R)-pantothenate biosynthesis; (R)-pantothenate from (R)-pantoate and beta-alanine: step 1/1. Catalyzes the condensation of pantoate with beta-alanine in an ATP-dependent reaction via a pantoyl-adenylate intermediate. This is Pantothenate synthetase from Campylobacter jejuni subsp. jejuni serotype O:6 (strain 81116 / NCTC 11828).